Reading from the N-terminus, the 213-residue chain is Na(+)-translocating NADH-quinone reductase subunit D (213 aa).

6 helical membrane-spanning segments follow: residues 21–41, 42–62, 69–86, 101–121, 131–151, and 183–203; these read PLIA…VNTA, ITMG…VSLL, SVRM…VIVI, LSVF…AESL, FLDG…VSIV, and FGLM…IWGV.

This sequence belongs to the NqrDE/RnfAE family. As to quaternary structure, composed of six subunits; NqrA, NqrB, NqrC, NqrD, NqrE and NqrF.

It is found in the cell inner membrane. It carries out the reaction a ubiquinone + n Na(+)(in) + NADH + H(+) = a ubiquinol + n Na(+)(out) + NAD(+). NQR complex catalyzes the reduction of ubiquinone-1 to ubiquinol by two successive reactions, coupled with the transport of Na(+) ions from the cytoplasm to the periplasm. NqrA to NqrE are probably involved in the second step, the conversion of ubisemiquinone to ubiquinol. This is Na(+)-translocating NADH-quinone reductase subunit D from Chlamydia caviae (strain ATCC VR-813 / DSM 19441 / 03DC25 / GPIC) (Chlamydophila caviae).